The following is a 98-amino-acid chain: ESAT-6-like protein EsxJ (98 aa).

It belongs to the WXG100 family. CFP-10 subfamily.

Its subcellular location is the secreted. The sequence is that of ESAT-6-like protein EsxJ from Mycobacterium bovis (strain ATCC BAA-935 / AF2122/97).